We begin with the raw amino-acid sequence, 468 residues long: Sushi repeat-containing protein SRPX2 (468 aa).

Residues 1–25 (MMTSPLTQRGALSLLLLLMPAVTPT) form the signal peptide. Sushi domains are found at residues 72–122 (ATCY…YCRQ), 123–181 (IRCH…VCVD), and 265–324 (RRCP…VCTP). Cystine bridges form between Cys74/Cys108, Cys94/Cys120, Cys125/Cys166, and Cys152/Cys179. The HYR domain occupies 180 to 264 (VDIDPPKIRC…SCKFIVKVQV (85 aa)). Intrachain disulfides connect Cys267–Cys309 and Cys295–Cys322.

Forms homooligomers. Interacts with PLAUR (via the UPAR/Ly6 domains), ADAMTS4 and CTSB. Interacts with HGF; the interaction increases the mitogenic activity of HGF. Post-translationally, contains chondroitin sulfate chains. As to expression, expressed in angiogenic endothelial cells (at protein level).

It is found in the secreted. Its subcellular location is the cytoplasm. It localises to the cell surface. The protein resides in the synapse. Functionally, acts as a ligand for the urokinase plasminogen activator surface receptor. Plays a role in angiogenesis by inducing endothelial cell migration and the formation of vascular network (cords). Involved in cellular migration and adhesion. Increases the phosphorylation levels of FAK. Interacts with and increases the mitogenic activity of HGF. Promotes synapse formation. Required for ultrasonic vocalizations. This is Sushi repeat-containing protein SRPX2 (Srpx2) from Mus musculus (Mouse).